The chain runs to 294 residues: uncharacterized protein (294 aa).

Active-site charge relay system residues include Thr43 and Tyr104. Catalysis depends on Tyr130, which acts as the Proton donor. Catalysis depends on Lys158, which acts as the Schiff-base intermediate with substrate.

This sequence belongs to the DapA family. Homotetramer.

The protein localises to the cytoplasm. This is an uncharacterized protein from Pyrococcus abyssi (strain GE5 / Orsay).